A 239-amino-acid chain; its full sequence is Probable transcriptional regulatory protein Ajs_1898 (239 aa).

Positions 1-21 (MAGHSKWANIQHRKGRQDEKR) are disordered.

Belongs to the TACO1 family.

It localises to the cytoplasm. The sequence is that of Probable transcriptional regulatory protein Ajs_1898 from Acidovorax sp. (strain JS42).